The chain runs to 1516 residues: Receptor-type tyrosine-protein phosphatase S (1516 aa).

Residues 1–28 form the signal peptide; that stretch reads MRILPSPGMPALLSLVSLLSVLLMGCVA. Residues 29–854 lie on the Extracellular side of the membrane; it reads ESPPVFIKKP…PQPIIDGEEG (826 aa). Ig-like C2-type domains lie at 32–122, 134–223, and 235–317; these read PVFI…AKLT, PNID…ANLY, and PRFS…AQIT. 2 disulfides stabilise this stretch: Cys53-Cys106 and Cys155-Cys206. The interval 67–71 is important for binding to glycosaminoglycan chains; sequence KKGKK. Residues Asn253 and Asn298 are each glycosylated (N-linked (GlcNAc...) asparagine). Cysteines 256 and 301 form a disulfide. Fibronectin type-III domains follow at residues 324-414, 419-513, 517-606, and 608-692; these read APGT…TGEQ, APRN…TQQG, QPMN…TLQS, and LPKN…TAAN. Residues 855–875 form a helical membrane-spanning segment; sequence LIWVIGPVLAVVFIICIVIAI. Residues 876 to 1516 are Cytoplasmic-facing; sequence LLYKNKRKDS…YLGSFDHYAT (641 aa). Tyrosine-protein phosphatase domains follow at residues 961–1216 and 1248–1507; these read LSQE…LLEA and MELE…ALEY. Active-site phosphocysteine intermediate residues include Cys1157 and Cys1448.

Belongs to the protein-tyrosine phosphatase family. Receptor class 2A subfamily. As to quaternary structure, homodimer. Binding to large heparan sulfate proteoglycan structures promotes oligomerization. Binding to chondroitin sulfate proteoglycan does not lead to oligomerization. Interacts (via Ig-like domains) with NTRK1 and NTRK3, but does not form detectable complexes with NTRK2. Interacts (via extracellular domain) with the heparan sulfate proteoglycans AGRN and COL18A1. In terms of processing, a cleavage occurs, separating the extracellular domain from the transmembrane segment. This process called 'ectodomain shedding' is thought to be involved in receptor desensitization, signal transduction and/or membrane localization. In terms of tissue distribution, detected in embryonic brain, dorsal root ganglion and spinal cord. Detected in embryonic retina (at protein level). Detected in embryonic brain, spinal cord, dorsal root ganglion, trigeminal ganglion, ganglia associated with the precardinal vein and vagus nerve, the inner and outer nuclear layer of the retina, limb, breast muscle, heart, gut and lung.

The protein localises to the cell membrane. The protein resides in the cell projection. Its subcellular location is the axon. It is found in the perikaryon. It localises to the cytoplasmic vesicle. The protein localises to the secretory vesicle. The protein resides in the synaptic vesicle membrane. Its subcellular location is the synapse. It is found in the synaptosome. It localises to the postsynaptic density. The protein localises to the neuron projection. The protein resides in the growth cone. The catalysed reaction is O-phospho-L-tyrosyl-[protein] + H2O = L-tyrosyl-[protein] + phosphate. Cell surface receptor that binds to glycosaminoglycans, including chondroitin sulfate proteoglycans and heparan sulfate proteoglycans. Binding to chondroitin sulfate and heparan sulfate proteoglycans has opposite effects on PTPRS oligomerization and regulation of neurite outgrowth. Contributes to the inhibition of neurite and axonal outgrowth by chondroitin sulfate proteoglycans, also after nerve transection. Plays a role in stimulating neurite outgrowth in response to the heparan sulfate proteoglycan GPC2. Required for normal brain development, especially for normal development of the pituitary gland and the olfactory bulb. Functions as tyrosine phosphatase. Mediates dephosphorylation of NTRK1, NTRK2 and NTRK3. Plays a role in down-regulation of signaling cascades that lead to the activation of Akt and MAP kinases. Down-regulates TLR9-mediated activation of NF-kappa-B, as well as production of TNF, interferon alpha and interferon beta. This chain is Receptor-type tyrosine-protein phosphatase S (PTPRS), found in Gallus gallus (Chicken).